Reading from the N-terminus, the 725-residue chain is Homeobox protein unc-62 (725 aa).

An MEIS N-terminal domain is found at 133 to 218 (SSDVCSSASF…PLDIVGDERA (86 aa)). 6 disordered regions span residues 214-258 (GDER…PYEP), 295-317 (SSSS…LHST), 329-359 (VSSP…GNSM), 386-419 (SLHQ…PPPQ), 491-555 (VKME…KRKV), and 615-661 (IDQN…PDPT). Positions 219 to 239 (SSSQPPMSPGSMGHHGHSGSP) are enriched in low complexity. Positions 388 to 400 (HQHHLHHPHHFPH) are enriched in basic residues. Residues 498 to 508 (SVSSSKSGGKK) show a composition bias toward low complexity. Residues 541–550 (LSDSANGSQN) show a composition bias toward polar residues. Positions 552 to 614 (KRKVPKVFSK…NARRRIVQPM (63 aa)) form a DNA-binding region, homeobox; TALE-type.

Belongs to the TALE/MEIS homeobox family.

The protein localises to the nucleus. Functionally, acts redundantly with ceh-20 and ceh-40 to perform overlapping roles during embryogenesis. Required for postembryonic development of the ectoderm, including the Q, V and P cell lineages, playing a crucial role in ensuring that these cells and their descendants undergo their invariant patterns of cell division, migration, fusion and morphogenesis. Has a role in the mig-13 pathway to promote anterior migration of neuroblasts in the Q lineage. Required for multiple roles in regulating vulva development. This is Homeobox protein unc-62 (unc-62) from Caenorhabditis briggsae.